We begin with the raw amino-acid sequence, 1040 residues long: Multidrug resistance protein MdtB (1040 aa).

12 helical membrane-spanning segments follow: residues 16 to 36, 347 to 367, 369 to 389, 396 to 416, 440 to 460, 472 to 492, 537 to 557, 863 to 883, 888 to 908, 911 to 931, 968 to 988, and 998 to 1018; these read FIMRPVATTLLMVAILLAGII, LMMAIALVVMIIYLFLRNIPA, IIPGVAVPLSLIGTFAVMVFL, LTLMALTIATGFVVDDAIVVI, IGFTIISLTFSLIAVLIPLLF, FAITLAVAILISAVVSLTLTP, WLTLSVALSTLLLSVLLWVFI, LGSTVWLIVAAVVAMYIVLGI, FIHPITILSTLPTAGVGALLA, IAGSELDVIAIIGIILLIGIV, ILMTTLAALLGALPLMLSTGV, and IGMVGGLIVSQVLTLFTTPVI.

The protein belongs to the resistance-nodulation-cell division (RND) (TC 2.A.6) family. MdtB subfamily. In terms of assembly, part of a tripartite efflux system composed of MdtA, MdtB and MdtC. MdtB forms a heteromultimer with MdtC.

It localises to the cell inner membrane. Its function is as follows. The MdtABC tripartite complex confers resistance against novobiocin and deoxycholate. This is Multidrug resistance protein MdtB from Escherichia coli O9:H4 (strain HS).